Reading from the N-terminus, the 436-residue chain is Histidinol dehydrogenase (436 aa).

Residues Tyr-136, Gln-198, and Asn-221 each contribute to the NAD(+) site. Residues Ser-244, Gln-266, and His-269 each coordinate substrate. Residues Gln-266 and His-269 each coordinate Zn(2+). Catalysis depends on proton acceptor residues Glu-334 and His-335. Residues His-335, Asp-368, Glu-422, and His-427 each coordinate substrate. A Zn(2+)-binding site is contributed by Asp-368. Residue His-427 participates in Zn(2+) binding.

It belongs to the histidinol dehydrogenase family. Zn(2+) serves as cofactor.

The catalysed reaction is L-histidinol + 2 NAD(+) + H2O = L-histidine + 2 NADH + 3 H(+). Its pathway is amino-acid biosynthesis; L-histidine biosynthesis; L-histidine from 5-phospho-alpha-D-ribose 1-diphosphate: step 9/9. In terms of biological role, catalyzes the sequential NAD-dependent oxidations of L-histidinol to L-histidinaldehyde and then to L-histidine. In Dehalococcoides mccartyi (strain CBDB1), this protein is Histidinol dehydrogenase.